The chain runs to 231 residues: Uracil-DNA glycosylase (231 aa).

Aspartate 71 (proton acceptor) is an active-site residue.

Belongs to the uracil-DNA glycosylase (UDG) superfamily. UNG family.

It is found in the cytoplasm. It catalyses the reaction Hydrolyzes single-stranded DNA or mismatched double-stranded DNA and polynucleotides, releasing free uracil.. Functionally, excises uracil residues from the DNA which can arise as a result of misincorporation of dUMP residues by DNA polymerase or due to deamination of cytosine. This Pseudomonas aeruginosa (strain ATCC 15692 / DSM 22644 / CIP 104116 / JCM 14847 / LMG 12228 / 1C / PRS 101 / PAO1) protein is Uracil-DNA glycosylase.